The primary structure comprises 235 residues: Cytochrome c oxidase subunit 2 (235 aa).

Topologically, residues 1-14 (MPYPMQLGFQDATS) are mitochondrial intermembrane. Residues 15–45 (PIMEELMYFHDHTLMIVFLISSLVLYIIILM) form a helical membrane-spanning segment. Topologically, residues 46-59 (LTTKLTHTSTMDAQ) are mitochondrial matrix. A helical transmembrane segment spans residues 60 to 87 (EVETIWTILPAVILILIALPSLRILYMM). Residues 88–235 (DEIYNPYLTV…MQSFLSYLYI (148 aa)) are Mitochondrial intermembrane-facing. Cu cation is bound by residues H161, C196, E198, C200, H204, and M207. E198 contacts Mg(2+). Y218 carries the post-translational modification Phosphotyrosine.

It belongs to the cytochrome c oxidase subunit 2 family. As to quaternary structure, component of the cytochrome c oxidase (complex IV, CIV), a multisubunit enzyme composed of 14 subunits. The complex is composed of a catalytic core of 3 subunits MT-CO1, MT-CO2 and MT-CO3, encoded in the mitochondrial DNA, and 11 supernumerary subunits COX4I, COX5A, COX5B, COX6A, COX6B, COX6C, COX7A, COX7B, COX7C, COX8 and NDUFA4, which are encoded in the nuclear genome. The complex exists as a monomer or a dimer and forms supercomplexes (SCs) in the inner mitochondrial membrane with NADH-ubiquinone oxidoreductase (complex I, CI) and ubiquinol-cytochrome c oxidoreductase (cytochrome b-c1 complex, complex III, CIII), resulting in different assemblies (supercomplex SCI(1)III(2)IV(1) and megacomplex MCI(2)III(2)IV(2)). Found in a complex with TMEM177, COA6, COX18, COX20, SCO1 and SCO2. Interacts with TMEM177 in a COX20-dependent manner. Interacts with COX20. Interacts with COX16. Cu cation serves as cofactor.

The protein localises to the mitochondrion inner membrane. It carries out the reaction 4 Fe(II)-[cytochrome c] + O2 + 8 H(+)(in) = 4 Fe(III)-[cytochrome c] + 2 H2O + 4 H(+)(out). Its function is as follows. Component of the cytochrome c oxidase, the last enzyme in the mitochondrial electron transport chain which drives oxidative phosphorylation. The respiratory chain contains 3 multisubunit complexes succinate dehydrogenase (complex II, CII), ubiquinol-cytochrome c oxidoreductase (cytochrome b-c1 complex, complex III, CIII) and cytochrome c oxidase (complex IV, CIV), that cooperate to transfer electrons derived from NADH and succinate to molecular oxygen, creating an electrochemical gradient over the inner membrane that drives transmembrane transport and the ATP synthase. Cytochrome c oxidase is the component of the respiratory chain that catalyzes the reduction of oxygen to water. Electrons originating from reduced cytochrome c in the intermembrane space (IMS) are transferred via the dinuclear copper A center (CU(A)) of subunit 2 and heme A of subunit 1 to the active site in subunit 1, a binuclear center (BNC) formed by heme A3 and copper B (CU(B)). The BNC reduces molecular oxygen to 2 water molecules using 4 electrons from cytochrome c in the IMS and 4 protons from the mitochondrial matrix. This Didelphis virginiana (North American opossum) protein is Cytochrome c oxidase subunit 2 (MT-CO2).